Consider the following 281-residue polypeptide: Bis(5'-nucleosyl)-tetraphosphatase, symmetrical (281 aa).

The protein belongs to the Ap4A hydrolase family.

It carries out the reaction P(1),P(4)-bis(5'-adenosyl) tetraphosphate + H2O = 2 ADP + 2 H(+). Hydrolyzes diadenosine 5',5'''-P1,P4-tetraphosphate to yield ADP. The chain is Bis(5'-nucleosyl)-tetraphosphatase, symmetrical from Pectobacterium atrosepticum (strain SCRI 1043 / ATCC BAA-672) (Erwinia carotovora subsp. atroseptica).